Consider the following 637-residue polypeptide: Biosynthetic arginine decarboxylase (637 aa).

Lys-101 is subject to N6-(pyridoxal phosphate)lysine. Phe-286–Tyr-296 provides a ligand contact to substrate.

It belongs to the Orn/Lys/Arg decarboxylase class-II family. SpeA subfamily. The cofactor is Mg(2+). It depends on pyridoxal 5'-phosphate as a cofactor.

It catalyses the reaction L-arginine + H(+) = agmatine + CO2. It participates in amine and polyamine biosynthesis; agmatine biosynthesis; agmatine from L-arginine: step 1/1. Functionally, catalyzes the biosynthesis of agmatine from arginine. The sequence is that of Biosynthetic arginine decarboxylase from Shewanella baltica (strain OS195).